The chain runs to 218 residues: Small ribosomal subunit protein uS3c (218 aa).

In terms of domain architecture, KH type-2 spans 47 to 118; sequence VQKHMRISSG…RLNIAIARVA (72 aa).

This sequence belongs to the universal ribosomal protein uS3 family. In terms of assembly, part of the 30S ribosomal subunit.

Its subcellular location is the plastid. It localises to the chloroplast. The protein is Small ribosomal subunit protein uS3c (rps3) of Nymphaea alba (White water-lily).